The chain runs to 546 residues: Chaperonin GroEL (546 aa).

Residues 29 to 32 (TLGP), lysine 50, 86 to 90 (DGTTT), glycine 414, 477 to 479 (NAL), and aspartate 493 each bind ATP.

This sequence belongs to the chaperonin (HSP60) family. Forms a cylinder of 14 subunits composed of two heptameric rings stacked back-to-back. Interacts with the co-chaperonin GroES.

The protein localises to the cytoplasm. The catalysed reaction is ATP + H2O + a folded polypeptide = ADP + phosphate + an unfolded polypeptide.. In terms of biological role, together with its co-chaperonin GroES, plays an essential role in assisting protein folding. The GroEL-GroES system forms a nano-cage that allows encapsulation of the non-native substrate proteins and provides a physical environment optimized to promote and accelerate protein folding. The polypeptide is Chaperonin GroEL (Leptospira interrogans serogroup Icterohaemorrhagiae serovar Lai (strain 56601)).